Here is a 387-residue protein sequence, read N- to C-terminus: Exodeoxyribonuclease 7 large subunit (387 aa).

The protein belongs to the XseA family. In terms of assembly, heterooligomer composed of large and small subunits.

It localises to the cytoplasm. It catalyses the reaction Exonucleolytic cleavage in either 5'- to 3'- or 3'- to 5'-direction to yield nucleoside 5'-phosphates.. Functionally, bidirectionally degrades single-stranded DNA into large acid-insoluble oligonucleotides, which are then degraded further into small acid-soluble oligonucleotides. This Campylobacter fetus subsp. fetus (strain 82-40) protein is Exodeoxyribonuclease 7 large subunit.